We begin with the raw amino-acid sequence, 285 residues long: Bifunctional protein FolD (285 aa).

Residues 165 to 167 (GRS) and S190 each bind NADP(+).

The protein belongs to the tetrahydrofolate dehydrogenase/cyclohydrolase family. Homodimer.

It carries out the reaction (6R)-5,10-methylene-5,6,7,8-tetrahydrofolate + NADP(+) = (6R)-5,10-methenyltetrahydrofolate + NADPH. The catalysed reaction is (6R)-5,10-methenyltetrahydrofolate + H2O = (6R)-10-formyltetrahydrofolate + H(+). The protein operates within one-carbon metabolism; tetrahydrofolate interconversion. Functionally, catalyzes the oxidation of 5,10-methylenetetrahydrofolate to 5,10-methenyltetrahydrofolate and then the hydrolysis of 5,10-methenyltetrahydrofolate to 10-formyltetrahydrofolate. This is Bifunctional protein FolD from Staphylococcus saprophyticus subsp. saprophyticus (strain ATCC 15305 / DSM 20229 / NCIMB 8711 / NCTC 7292 / S-41).